The chain runs to 81 residues: Putative CNGA1-overlapping antisense gene protein (81 aa).

As to expression, expressed in brain, notably in regions involved in long-term potentiation and long-term depression, such as hippocampal CA1 and CA3, dentate gyrus and cerebellar Purkinje layer.

The chain is Putative CNGA1-overlapping antisense gene protein from Homo sapiens (Human).